A 428-amino-acid polypeptide reads, in one-letter code: Adenylosuccinate synthetase (428 aa).

Residues 12–18 (GDEGKGK) and 40–42 (GHT) contribute to the GTP site. D13 (proton acceptor) is an active-site residue. Residues D13 and G40 each contribute to the Mg(2+) site. IMP is bound by residues 13 to 16 (DEGK), 38 to 41 (NAGH), T128, R142, Q223, T238, and R302. H41 (proton donor) is an active-site residue. Residue 298 to 304 (VTTGRPR) coordinates substrate. GTP is bound by residues R304, 330 to 332 (KLD), and 412 to 414 (GVG).

It belongs to the adenylosuccinate synthetase family. Homodimer. The cofactor is Mg(2+).

It is found in the cytoplasm. It catalyses the reaction IMP + L-aspartate + GTP = N(6)-(1,2-dicarboxyethyl)-AMP + GDP + phosphate + 2 H(+). It participates in purine metabolism; AMP biosynthesis via de novo pathway; AMP from IMP: step 1/2. Plays an important role in the de novo pathway of purine nucleotide biosynthesis. Catalyzes the first committed step in the biosynthesis of AMP from IMP. The protein is Adenylosuccinate synthetase of Halothermothrix orenii (strain H 168 / OCM 544 / DSM 9562).